Here is a 357-residue protein sequence, read N- to C-terminus: Red-sensitive opsin-1 (357 aa).

The Extracellular segment spans residues 1–49; it reads MAEHWGDAIYAARRKGDETTREAMFTYTNSNNTKDPFEGPNYHIAPRWV. Residue asparagine 31 is glycosylated (N-linked (GlcNAc...) asparagine). The chain crosses the membrane as a helical span at residues 50–74; that stretch reads YNVATVWMFFVVVASTFTNGLVLVA. At 75–86 the chain is on the cytoplasmic side; that stretch reads TAKFKKLRHPLN. A helical membrane pass occupies residues 87–112; that stretch reads WILVNLAIADLGETLFASTISVINQF. Topologically, residues 113–126 are extracellular; that stretch reads FGYFILGHPMCIFE. Cysteine 123 and cysteine 200 form a disulfide bridge. The helical transmembrane segment at 127-146 threads the bilayer; the sequence is GYTVSVCGIAALWSLTVISW. The Cytoplasmic portion of the chain corresponds to 147-165; the sequence is ERWVVVCKPFGNVKFDAKW. A helical transmembrane segment spans residues 166-189; the sequence is ASAGIIFSWVWAAAWCAPPIFGWS. The Extracellular segment spans residues 190 to 215; it reads RYWPHGLKTSCGPDVFSGSEDPGVQS. A helical transmembrane segment spans residues 216–243; it reads YMVVLMITCCIIPLAIIILCYIAVYLAI. Residues 244 to 265 lie on the Cytoplasmic side of the membrane; the sequence is HAVAQQQKDSESTQKAEKEVSR. A helical membrane pass occupies residues 266–289; the sequence is MVVVMIFAYCFCWGPYTFFACFAA. Over 290-297 the chain is Extracellular; it reads ANPGYAFH. Residues 298 to 322 form a helical membrane-spanning segment; the sequence is PLAAAMPAYFAKSATIYNPVIYVFM. N6-(retinylidene)lysine is present on lysine 309. Residues 323 to 357 lie on the Cytoplasmic side of the membrane; sequence NRQFRVCIMQLFGKKVDDGSEVSTSKTEVSSVAPA.

It belongs to the G-protein coupled receptor 1 family. Opsin subfamily. In terms of processing, phosphorylated on some or all of the serine and threonine residues present in the C-terminal region. As to expression, retinal double cone principal photoreceptor cell outer segments.

The protein localises to the membrane. Its function is as follows. Visual pigments are the light-absorbing molecules that mediate vision. They consist of an apoprotein, opsin, covalently linked to cis-retinal. In Danio rerio (Zebrafish), this protein is Red-sensitive opsin-1 (opn1lw1).